Reading from the N-terminus, the 103-residue chain is Large ribosomal subunit protein bL21 (103 aa).

Belongs to the bacterial ribosomal protein bL21 family. As to quaternary structure, part of the 50S ribosomal subunit. Contacts protein L20.

In terms of biological role, this protein binds to 23S rRNA in the presence of protein L20. This chain is Large ribosomal subunit protein bL21, found in Laribacter hongkongensis (strain HLHK9).